Consider the following 337-residue polypeptide: GTP 3',8-cyclase (337 aa).

A Radical SAM core domain is found at 17–243; sequence PFQRQYYYLR…HKSHTDGPAK (227 aa). Residue R26 coordinates GTP. C33 and C37 together coordinate [4Fe-4S] cluster. Residue Y39 coordinates S-adenosyl-L-methionine. C40 contributes to the [4Fe-4S] cluster binding site. R76 lines the GTP pocket. G80 lines the S-adenosyl-L-methionine pocket. T107 contributes to the GTP binding site. S-adenosyl-L-methionine is bound at residue S131. K168 lines the GTP pocket. M202 lines the S-adenosyl-L-methionine pocket. The [4Fe-4S] cluster site is built by C265 and C268. GTP is bound at residue 270-272; that stretch reads RLR. [4Fe-4S] cluster is bound at residue C282.

This sequence belongs to the radical SAM superfamily. MoaA family. Monomer and homodimer. [4Fe-4S] cluster is required as a cofactor.

It carries out the reaction GTP + AH2 + S-adenosyl-L-methionine = (8S)-3',8-cyclo-7,8-dihydroguanosine 5'-triphosphate + 5'-deoxyadenosine + L-methionine + A + H(+). It participates in cofactor biosynthesis; molybdopterin biosynthesis. In terms of biological role, catalyzes the cyclization of GTP to (8S)-3',8-cyclo-7,8-dihydroguanosine 5'-triphosphate. The polypeptide is GTP 3',8-cyclase (Haemophilus influenzae (strain 86-028NP)).